Reading from the N-terminus, the 330-residue chain is Malate dehydrogenase (330 aa).

12–18 (GAAGQIG) is a binding site for NAD(+). The substrate site is built by arginine 93 and arginine 99. NAD(+) contacts are provided by residues asparagine 106, glutamine 113, and 130–132 (VGN). Residues asparagine 132 and arginine 163 each contribute to the substrate site. The active-site Proton acceptor is the histidine 188.

Belongs to the LDH/MDH superfamily. MDH type 2 family.

The enzyme catalyses (S)-malate + NAD(+) = oxaloacetate + NADH + H(+). Its function is as follows. Catalyzes the reversible oxidation of malate to oxaloacetate. In Legionella pneumophila subsp. pneumophila (strain Philadelphia 1 / ATCC 33152 / DSM 7513), this protein is Malate dehydrogenase.